We begin with the raw amino-acid sequence, 497 residues long: Glycerol kinase (497 aa).

Position 13 (Thr-13) interacts with ADP. Residues Thr-13, Thr-14, and Ser-15 each coordinate ATP. Residue Thr-13 coordinates sn-glycerol 3-phosphate. ADP is bound at residue Arg-17. Sn-glycerol 3-phosphate-binding residues include Arg-83, Glu-84, and Tyr-135. Residues Arg-83, Glu-84, and Tyr-135 each coordinate glycerol. His-231 carries the post-translational modification Phosphohistidine; by HPr. Residue Asp-245 coordinates sn-glycerol 3-phosphate. 2 residues coordinate glycerol: Asp-245 and Gln-246. The ADP site is built by Thr-267 and Gly-310. ATP contacts are provided by Thr-267, Gly-310, Gln-314, and Gly-411. 2 residues coordinate ADP: Gly-411 and Asn-415.

It belongs to the FGGY kinase family. As to quaternary structure, homotetramer and homodimer (in equilibrium). In terms of processing, the phosphoenolpyruvate-dependent sugar phosphotransferase system (PTS), including enzyme I, and histidine-containing protein (HPr) are required for the phosphorylation, which leads to the activation of the enzyme.

The catalysed reaction is glycerol + ATP = sn-glycerol 3-phosphate + ADP + H(+). It participates in polyol metabolism; glycerol degradation via glycerol kinase pathway; sn-glycerol 3-phosphate from glycerol: step 1/1. Activated by phosphorylation and inhibited by fructose 1,6-bisphosphate (FBP). Its function is as follows. Key enzyme in the regulation of glycerol uptake and metabolism. Catalyzes the phosphorylation of glycerol to yield sn-glycerol 3-phosphate. The protein is Glycerol kinase of Listeria monocytogenes serotype 4b (strain F2365).